A 274-amino-acid chain; its full sequence is 3-methyl-2-oxobutanoate hydroxymethyltransferase (274 aa).

Mg(2+) is bound by residues D44 and D83. Residues 44-45 (DS), D83, and K113 contribute to the 3-methyl-2-oxobutanoate site. Position 115 (E115) interacts with Mg(2+). Catalysis depends on E182, which acts as the Proton acceptor.

It belongs to the PanB family. As to quaternary structure, homodecamer; pentamer of dimers. Mg(2+) is required as a cofactor.

Its subcellular location is the cytoplasm. It catalyses the reaction 3-methyl-2-oxobutanoate + (6R)-5,10-methylene-5,6,7,8-tetrahydrofolate + H2O = 2-dehydropantoate + (6S)-5,6,7,8-tetrahydrofolate. The protein operates within cofactor biosynthesis; (R)-pantothenate biosynthesis; (R)-pantoate from 3-methyl-2-oxobutanoate: step 1/2. Functionally, catalyzes the reversible reaction in which hydroxymethyl group from 5,10-methylenetetrahydrofolate is transferred onto alpha-ketoisovalerate to form ketopantoate. The chain is 3-methyl-2-oxobutanoate hydroxymethyltransferase from Campylobacter jejuni (strain RM1221).